Reading from the N-terminus, the 161-residue chain is Cytochrome c-type biogenesis protein CcmE (161 aa).

Residues 1–8 (MNARRKKR) are Cytoplasmic-facing. A helical; Signal-anchor for type II membrane protein membrane pass occupies residues 9–29 (LTLAVALIGGVAAIASLLLYA). The Periplasmic portion of the chain corresponds to 30–161 (LNSNLNLFYT…DYNEQQKTSY (132 aa)). Heme-binding residues include His-131 and Tyr-135.

Belongs to the CcmE/CycJ family.

Its subcellular location is the cell inner membrane. Functionally, heme chaperone required for the biogenesis of c-type cytochromes. Transiently binds heme delivered by CcmC and transfers the heme to apo-cytochromes in a process facilitated by CcmF and CcmH. The protein is Cytochrome c-type biogenesis protein CcmE of Shewanella sediminis (strain HAW-EB3).